Here is a 142-residue protein sequence, read N- to C-terminus: MAKKVAGQLKLQVKAGSANPSPPIGPALGQRGINIMEFCKAFNAATQEMEKGMPIPVVITYYQDKSFTFIMKQPPVSYFLKREAKIQSGSKTPGKAKAGSISKAQIRTIAEAKMKDLNAADIEGAMAMVEGSARSMGLEVTG.

Belongs to the universal ribosomal protein uL11 family. Part of the ribosomal stalk of the 50S ribosomal subunit. Interacts with L10 and the large rRNA to form the base of the stalk. L10 forms an elongated spine to which L12 dimers bind in a sequential fashion forming a multimeric L10(L12)X complex. Post-translationally, one or more lysine residues are methylated.

Forms part of the ribosomal stalk which helps the ribosome interact with GTP-bound translation factors. The protein is Large ribosomal subunit protein uL11 of Sinorhizobium fredii (strain NBRC 101917 / NGR234).